A 176-amino-acid polypeptide reads, in one-letter code: Large ribosomal subunit protein uL6 (176 aa).

Belongs to the universal ribosomal protein uL6 family. Part of the 50S ribosomal subunit.

Its function is as follows. This protein binds to the 23S rRNA, and is important in its secondary structure. It is located near the subunit interface in the base of the L7/L12 stalk, and near the tRNA binding site of the peptidyltransferase center. The chain is Large ribosomal subunit protein uL6 from Burkholderia vietnamiensis (strain G4 / LMG 22486) (Burkholderia cepacia (strain R1808)).